The primary structure comprises 337 residues: Ketol-acid reductoisomerase (NADP(+)) (337 aa).

One can recognise a KARI N-terminal Rossmann domain in the interval 3 to 183 (VEMFYDADAD…GGARAGVIKT (181 aa)). Residues 26-29 (YGSQ), K49, S52, S54, and 84-87 (DTAQ) contribute to the NADP(+) site. H109 is an active-site residue. NADP(+) is bound at residue G135. Residues 184-329 (TFKDETETDL…KKLRDLMSWV (146 aa)) enclose the KARI C-terminal knotted domain. Mg(2+) is bound by residues D192, E196, E228, and E232. S253 contacts substrate.

It belongs to the ketol-acid reductoisomerase family. Mg(2+) serves as cofactor.

The catalysed reaction is (2R)-2,3-dihydroxy-3-methylbutanoate + NADP(+) = (2S)-2-acetolactate + NADPH + H(+). The enzyme catalyses (2R,3R)-2,3-dihydroxy-3-methylpentanoate + NADP(+) = (S)-2-ethyl-2-hydroxy-3-oxobutanoate + NADPH + H(+). It functions in the pathway amino-acid biosynthesis; L-isoleucine biosynthesis; L-isoleucine from 2-oxobutanoate: step 2/4. Its pathway is amino-acid biosynthesis; L-valine biosynthesis; L-valine from pyruvate: step 2/4. In terms of biological role, involved in the biosynthesis of branched-chain amino acids (BCAA). Catalyzes an alkyl-migration followed by a ketol-acid reduction of (S)-2-acetolactate (S2AL) to yield (R)-2,3-dihydroxy-isovalerate. In the isomerase reaction, S2AL is rearranged via a Mg-dependent methyl migration to produce 3-hydroxy-3-methyl-2-ketobutyrate (HMKB). In the reductase reaction, this 2-ketoacid undergoes a metal-dependent reduction by NADPH to yield (R)-2,3-dihydroxy-isovalerate. In Mycolicibacterium gilvum (strain PYR-GCK) (Mycobacterium gilvum (strain PYR-GCK)), this protein is Ketol-acid reductoisomerase (NADP(+)).